A 227-amino-acid chain; its full sequence is MQQQHLMQMNQNMMGGYTSPAAVTTDLIQQYLDENKQLILAILDNQNNGKAEECERHQAKLQHNLMYLAAIADSQPPQTAPLSQYPSNLMMQPGPRYMPPQSGQMMNPQSLMAARSSMMYAHPSLSPLQQQQAAHGQLGMAPGGGGGGTTSGFSILHGEASMGGGGAGAGAGNNMMNAGMFSGFGRSGSGAKEGSTSLSVDVRGGTSSGAQSGDGEYLKVGTEEEGS.

Residues 186 to 227 (RSGSGAKEGSTSLSVDVRGGTSSGAQSGDGEYLKVGTEEEGS) form a disordered region.

The protein belongs to the SS18 family. In terms of assembly, interacts with several GRFs. Interacts with GRF10. Interacts with GRF1. As to expression, expressed in shoots, aerial roots, ears and tassels. Expressed in the shoot apical meristem (SAM), young leaf primordia, leaf margins, inflorescence meristem, floral meristem and spikelet meristem.

In terms of biological role, transcription coactivator that plays a role in the regulation of meristematic function in leaves, stems and inflorescences. Regulates shoot architecture and meristem determinacy. Binds to the inflorescence architecture gene UB3 (unbranched3). Regulates the expression of several genes involved in inflorescence architecture. Component of a network formed by the microRNA396 (miRNA396), the GRFs and their interacting factors (GIFs) acting in the regulation of meristem function, at least partially through the control of cell proliferation. Associates with the core SWI/SNF chromatin-remodeling complex and specific GRFs to tightly regulate the transition between cell division and cell expansion in growing leaves. The chain is GRF-interacting factor 1 from Zea mays (Maize).